A 150-amino-acid polypeptide reads, in one-letter code: UPF0039 protein C11D3.02c (150 aa).

The 142-residue stretch at 9 to 150 (KYFNSLDVKE…IPHVEMRLEL (142 aa)) folds into the N-acetyltransferase domain.

The protein belongs to the UPF0039 (ElaA) family.

In Schizosaccharomyces pombe (strain 972 / ATCC 24843) (Fission yeast), this protein is UPF0039 protein C11D3.02c.